Here is a 179-residue protein sequence, read N- to C-terminus: Large ribosomal subunit protein uL5 (179 aa).

Belongs to the universal ribosomal protein uL5 family. As to quaternary structure, part of the 50S ribosomal subunit; part of the 5S rRNA/L5/L18/L25 subcomplex. Contacts the 5S rRNA and the P site tRNA. Forms a bridge to the 30S subunit in the 70S ribosome.

In terms of biological role, this is one of the proteins that bind and probably mediate the attachment of the 5S RNA into the large ribosomal subunit, where it forms part of the central protuberance. In the 70S ribosome it contacts protein S13 of the 30S subunit (bridge B1b), connecting the 2 subunits; this bridge is implicated in subunit movement. Contacts the P site tRNA; the 5S rRNA and some of its associated proteins might help stabilize positioning of ribosome-bound tRNAs. The polypeptide is Large ribosomal subunit protein uL5 (Pectobacterium atrosepticum (strain SCRI 1043 / ATCC BAA-672) (Erwinia carotovora subsp. atroseptica)).